The primary structure comprises 87 residues: uncharacterized protein (87 aa).

Residues 43–87 (NQGYGQNFGDASGFMGTRSHVDDRDQIDSPASFESEAVNSSIKRK) form a disordered region.

This is an uncharacterized protein from Bacillus subtilis (strain 168).